A 236-amino-acid polypeptide reads, in one-letter code: Small ribosomal subunit protein mS41 (236 aa).

It belongs to the mitochondrion-specific ribosomal protein mS41 family. In terms of assembly, component of the mitochondrial small ribosomal subunit (mt-SSU). Mature N.crassa 74S mitochondrial ribosomes consist of a small (37S) and a large (54S) subunit. The 37S small subunit contains a 16S ribosomal RNA (16S mt-rRNA) and 32 different proteins. The 54S large subunit contains a 23S rRNA (23S mt-rRNA) and 42 different proteins.

The protein localises to the mitochondrion. Component of the mitochondrial ribosome (mitoribosome), a dedicated translation machinery responsible for the synthesis of mitochondrial genome-encoded proteins, including at least some of the essential transmembrane subunits of the mitochondrial respiratory chain. The mitoribosomes are attached to the mitochondrial inner membrane and translation products are cotranslationally integrated into the membrane. The polypeptide is Small ribosomal subunit protein mS41 (fyv4) (Neurospora crassa (strain ATCC 24698 / 74-OR23-1A / CBS 708.71 / DSM 1257 / FGSC 987)).